The primary structure comprises 130 residues: Small ribosomal subunit protein uS9 (130 aa).

This sequence belongs to the universal ribosomal protein uS9 family.

In Nitratidesulfovibrio vulgaris (strain ATCC 29579 / DSM 644 / CCUG 34227 / NCIMB 8303 / VKM B-1760 / Hildenborough) (Desulfovibrio vulgaris), this protein is Small ribosomal subunit protein uS9.